The sequence spans 510 residues: NAD(P)H-quinone oxidoreductase subunit 2 B, chloroplastic (510 aa).

Transmembrane regions (helical) follow at residues 24–44 (LLLF…GLIL), 57–77 (IPWL…SLLF), 99–119 (IFQF…VEYI), 124–144 (MAIT…MFLC), 149–169 (LITI…LSGY), 183–203 (YLLM…WLYG), 227–247 (PGIS…LSPA), 295–315 (WHLL…LIAI), 323–343 (MLAY…IVGD), 354–374 (YMLF…LFGL), 395–415 (ALSL…AGFF), 418–438 (LYLF…IGLL), and 484–504 (MIVC…IIAI).

This sequence belongs to the complex I subunit 2 family. In terms of assembly, NDH is composed of at least 16 different subunits, 5 of which are encoded in the nucleus.

It is found in the plastid. It localises to the chloroplast thylakoid membrane. It catalyses the reaction a plastoquinone + NADH + (n+1) H(+)(in) = a plastoquinol + NAD(+) + n H(+)(out). The enzyme catalyses a plastoquinone + NADPH + (n+1) H(+)(in) = a plastoquinol + NADP(+) + n H(+)(out). Its function is as follows. NDH shuttles electrons from NAD(P)H:plastoquinone, via FMN and iron-sulfur (Fe-S) centers, to quinones in the photosynthetic chain and possibly in a chloroplast respiratory chain. The immediate electron acceptor for the enzyme in this species is believed to be plastoquinone. Couples the redox reaction to proton translocation, and thus conserves the redox energy in a proton gradient. This is NAD(P)H-quinone oxidoreductase subunit 2 B, chloroplastic from Lactuca sativa (Garden lettuce).